A 274-amino-acid chain; its full sequence is tRNA pseudouridine synthase A (274 aa).

The active-site Nucleophile is D51. Position 109 (Y109) interacts with substrate.

This sequence belongs to the tRNA pseudouridine synthase TruA family. In terms of assembly, homodimer.

The enzyme catalyses uridine(38/39/40) in tRNA = pseudouridine(38/39/40) in tRNA. Its function is as follows. Formation of pseudouridine at positions 38, 39 and 40 in the anticodon stem and loop of transfer RNAs. The chain is tRNA pseudouridine synthase A from Acidovorax sp. (strain JS42).